Reading from the N-terminus, the 190-residue chain is Putative manganese efflux pump MntP (190 aa).

6 consecutive transmembrane segments (helical) span residues 6-26 (IWLL…TSGI), 36-56 (FFIM…IGWF), 61-81 (FSHL…AFWG), 108-128 (LAIA…FVGI), 138-158 (IVII…IGVF), and 169-189 (LWGG…HLFL).

Belongs to the MntP (TC 9.B.29) family.

Its subcellular location is the cell inner membrane. Functionally, probably functions as a manganese efflux pump. The protein is Putative manganese efflux pump MntP of Phocaeicola vulgatus (strain ATCC 8482 / DSM 1447 / JCM 5826 / CCUG 4940 / NBRC 14291 / NCTC 11154) (Bacteroides vulgatus).